The chain runs to 277 residues: Undecaprenyl-diphosphatase (277 aa).

A run of 7 helical transmembrane segments spans residues 3 to 23 (IALL…EFLP), 44 to 64 (AKVF…LVYW), 82 to 102 (QFAL…LLFG), 109 to 129 (LFTP…ILWA), 189 to 209 (TDFS…YSLF), 218 to 238 (ADAP…WLCI), and 253 to 273 (FAWY…SGVV).

The protein belongs to the UppP family.

It localises to the cell inner membrane. It carries out the reaction di-trans,octa-cis-undecaprenyl diphosphate + H2O = di-trans,octa-cis-undecaprenyl phosphate + phosphate + H(+). Catalyzes the dephosphorylation of undecaprenyl diphosphate (UPP). Confers resistance to bacitracin. The polypeptide is Undecaprenyl-diphosphatase (Polaromonas naphthalenivorans (strain CJ2)).